A 483-amino-acid polypeptide reads, in one-letter code: NADH-quinone oxidoreductase subunit N (483 aa).

Transmembrane regions (helical) follow at residues alanine 13 to valine 33, tyrosine 39 to valine 57, proline 76 to serine 96, phenylalanine 110 to phenylalanine 130, leucine 131 to glutamine 151, phenylalanine 165 to valine 185, isoleucine 206 to valine 226, proline 240 to valine 260, methionine 277 to serine 297, methionine 302 to serine 322, methionine 330 to leucine 350, leucine 373 to phenylalanine 393, isoleucine 406 to tyrosine 426, and leucine 459 to isoleucine 479.

It belongs to the complex I subunit 2 family. NDH-1 is composed of 14 different subunits. Subunits NuoA, H, J, K, L, M, N constitute the membrane sector of the complex.

The protein resides in the cell inner membrane. It carries out the reaction a quinone + NADH + 5 H(+)(in) = a quinol + NAD(+) + 4 H(+)(out). Functionally, NDH-1 shuttles electrons from NADH, via FMN and iron-sulfur (Fe-S) centers, to quinones in the respiratory chain. The immediate electron acceptor for the enzyme in this species is believed to be ubiquinone. Couples the redox reaction to proton translocation (for every two electrons transferred, four hydrogen ions are translocated across the cytoplasmic membrane), and thus conserves the redox energy in a proton gradient. The chain is NADH-quinone oxidoreductase subunit N from Thiobacillus denitrificans (strain ATCC 25259 / T1).